A 321-amino-acid polypeptide reads, in one-letter code: uncharacterized protein (321 aa).

The span at 1 to 12 (MSMFLKKQKKTK) shows a compositional bias: basic residues. 2 disordered regions span residues 1–59 (MSMF…MRKT) and 71–289 (EDCT…GPED). Residues 50–59 (DGIKETMRKT) are compositionally biased toward basic and acidic residues. Over residues 99–115 (DDSDSESSEDGGEDDEE) the composition is skewed to acidic residues. Low complexity predominate over residues 156–175 (SDSSSSSSSSSDSESSSSSD). Positions 179-189 (DGDRSTPEPDI) are enriched in basic and acidic residues. Low complexity predominate over residues 231–242 (EPSPLRAAAAAA).

This is an uncharacterized protein from Equus caballus (Horse).